Here is a 575-residue protein sequence, read N- to C-terminus: Aspartate--tRNA ligase (575 aa).

Glutamate 169 is an L-aspartate binding site. An aspartate region spans residues 193 to 196; sequence QLFK. Residue arginine 215 participates in L-aspartate binding. Residues 215-217 and glutamine 224 each bind ATP; that span reads RDE. L-aspartate is bound at residue histidine 438. Glutamate 472 contributes to the ATP binding site. Arginine 479 contributes to the L-aspartate binding site. 524-527 contacts ATP; it reads GLDR.

This sequence belongs to the class-II aminoacyl-tRNA synthetase family. Type 1 subfamily. Homodimer.

It localises to the cytoplasm. It catalyses the reaction tRNA(Asp) + L-aspartate + ATP = L-aspartyl-tRNA(Asp) + AMP + diphosphate. Catalyzes the attachment of L-aspartate to tRNA(Asp) in a two-step reaction: L-aspartate is first activated by ATP to form Asp-AMP and then transferred to the acceptor end of tRNA(Asp). The chain is Aspartate--tRNA ligase from Mycoplasma capricolum subsp. capricolum (strain California kid / ATCC 27343 / NCTC 10154).